Here is a 310-residue protein sequence, read N- to C-terminus: Deoxyribonuclease gamma (310 aa).

A signal peptide spans 1-25 (MSLHPASPRLASLLLFILALHDTLA). The short motif at 40 to 56 (KKENHEAMDIIVKIIKR) is the Bipartite nuclear localization signal element. Catalysis depends on residues Glu105 and His160. An intrachain disulfide couples Cys199 to Cys236. Positions 289–310 (SRAFTNNRKSVSLKKRKKGNRS) are not required for free DNA-nuclease activity but required for activity towards liposome-coated DNA. Positions 301–307 (LKKRKKG) match the Nuclear localization signal motif.

The protein belongs to the DNase I family. It depends on Ca(2+) as a cofactor. Requires Mg(2+) as cofactor. Post-translationally, poly-ADP-ribosylated by PARP1. ADP-ribosylation negatively regulates enzymatic activity during apoptosis. Expressed at high levels in liver, spleen and testes. Expressed at lower levels in heart, lungs, skeletal muscle and kidney. Not expressed in brain. Predominantly expressed in macrophages; at protein level. Secreted by mononuclear phagocytes.

It localises to the nucleus. The protein localises to the endoplasmic reticulum. Its subcellular location is the secreted. Inhibited by zinc. Inhibited by heparin and proteolysis by plasmin. Its function is as follows. Has DNA hydrolytic activity. Is capable of both single- and double-stranded DNA cleavage, producing DNA fragments with 3'-OH ends. Can cleave chromatin to nucleosomal units and cleaves nucleosomal and liposome-coated DNA. Acts in internucleosomal DNA fragmentation (INDF) during apoptosis and necrosis. The role in apoptosis includes myogenic and neuronal differentiation, and BCR-mediated clonal deletion of self-reactive B cells. Is active on chromatin in apoptotic cell-derived membrane-coated microparticles and thus suppresses anti-DNA autoimmunity. Together with DNASE1, plays a key role in degrading neutrophil extracellular traps (NETs). NETs are mainly composed of DNA fibers and are released by neutrophils to bind pathogens during inflammation. Degradation of intravascular NETs by DNASE1 and DNASE1L3 is required to prevent formation of clots that obstruct blood vessels and cause organ damage following inflammation. In Mus musculus (Mouse), this protein is Deoxyribonuclease gamma.